The sequence spans 127 residues: Aspartate 1-decarboxylase (127 aa).

The active-site Schiff-base intermediate with substrate; via pyruvic acid is Ser25. Ser25 is modified (pyruvic acid (Ser)). Residue Thr57 participates in substrate binding. Residue Tyr58 is the Proton donor of the active site. Position 73 to 75 (73 to 75 (GAA)) interacts with substrate.

It belongs to the PanD family. In terms of assembly, heterooctamer of four alpha and four beta subunits. The cofactor is pyruvate. Is synthesized initially as an inactive proenzyme, which is activated by self-cleavage at a specific serine bond to produce a beta-subunit with a hydroxyl group at its C-terminus and an alpha-subunit with a pyruvoyl group at its N-terminus.

The protein localises to the cytoplasm. The enzyme catalyses L-aspartate + H(+) = beta-alanine + CO2. It participates in cofactor biosynthesis; (R)-pantothenate biosynthesis; beta-alanine from L-aspartate: step 1/1. Functionally, catalyzes the pyruvoyl-dependent decarboxylation of aspartate to produce beta-alanine. The polypeptide is Aspartate 1-decarboxylase (Bacillus cereus (strain B4264)).